Here is a 196-residue protein sequence, read N- to C-terminus: RNA polymerase II subunit B1 CTD phosphatase RTR2 (196 aa).

The RTR1-type zinc-finger motif lies at 52-123 (YLARLLSPMS…LSQTPLHERR (72 aa)). C75, C80, C99, and H103 together coordinate Zn(2+).

Belongs to the RPAP2 family.

It is found in the cytoplasm. It localises to the nucleus. It carries out the reaction O-phospho-L-seryl-[protein] + H2O = L-seryl-[protein] + phosphate. The enzyme catalyses O-phospho-L-threonyl-[protein] + H2O = L-threonyl-[protein] + phosphate. In terms of biological role, probable RNA polymerase II subunit B1 C-terminal domain (CTD) phosphatase that regulates RNA polymerase II transcription. May have functional redundancy with RTR1. This Saccharomyces cerevisiae (strain ATCC 204508 / S288c) (Baker's yeast) protein is RNA polymerase II subunit B1 CTD phosphatase RTR2 (RTR2).